The chain runs to 172 residues: Hemagglutinin/amebocyte aggregation factor (172 aa).

The first 19 residues, 1–19 (MNSPAIVIIIFSTLTFSEA), serve as a signal peptide directing secretion. 4 tandem repeats follow at residues 21–25 (VNDWD), 50–54 (EDRRW), 73–77 (VNDWD), and 102–106 (EDRRW). 5 cysteine pairs are disulfide-bonded: C32-C58, C67-C172, C84-C110, C111-C117, and C123-C167. 2 repeat units span residues 129-133 (VNSWD) and 158-162 (EDRRW).

This sequence belongs to the dermatopontin family.

It is found in the secreted. Its function is as follows. Possesses the property of inducing both aggregation of amebocytes and agglutination of erythrocytes. This Limulus polyphemus (Atlantic horseshoe crab) protein is Hemagglutinin/amebocyte aggregation factor.